We begin with the raw amino-acid sequence, 458 residues long: Acyl-CoA-binding domain-containing protein 5 (458 aa).

The ACB domain maps to 8–97 (HQTRFEAAVS…MKKILETMPV (90 aa)). Residues 19–28 (IQSLPKNGSF), 39–43 (YSFYK), Lys65, and Tyr84 contribute to the an acyl-CoA site. Disordered regions lie at residues 119–248 (KHGR…REED) and 296–369 (TETS…GPNG). The segment covering 125–139 (GVTSELGSVLTSTPN) has biased composition (polar residues). Residues 154 to 188 (AESDEEQAATKEVREEDEEEESEHSEQEDKDVEQQ) are a coiled coil. 3 stretches are compositionally biased toward basic and acidic residues: residues 177–195 (HSEQ…EKPA), 303–313 (ELKDGGEDGKQ), and 322–338 (TWSE…ERPS). Positions 343–356 (GGDGSRSGQIGSGG) are enriched in gly residues. Positions 373–402 (EQIAVVLMRLQEDMQNVLQRLHSLEVQTAS) form a coiled coil. Residues 430–450 (GTLALAVVWPFVVHWLMHVFL) form a helical membrane-spanning segment.

This sequence belongs to the ATG37 family.

It is found in the peroxisome membrane. Its function is as follows. Acyl-CoA binding protein which acts as the peroxisome receptor for pexophagy but is dispensable for aggrephagy and nonselective autophagy. Binds medium- and long-chain acyl-CoA esters. The chain is Acyl-CoA-binding domain-containing protein 5 (acbd5) from Xenopus tropicalis (Western clawed frog).